Here is a 353-residue protein sequence, read N- to C-terminus: Phosphoribosylformylglycinamidine cyclo-ligase (353 aa).

It belongs to the AIR synthase family.

The protein resides in the cytoplasm. It carries out the reaction 2-formamido-N(1)-(5-O-phospho-beta-D-ribosyl)acetamidine + ATP = 5-amino-1-(5-phospho-beta-D-ribosyl)imidazole + ADP + phosphate + H(+). The protein operates within purine metabolism; IMP biosynthesis via de novo pathway; 5-amino-1-(5-phospho-D-ribosyl)imidazole from N(2)-formyl-N(1)-(5-phospho-D-ribosyl)glycinamide: step 2/2. The protein is Phosphoribosylformylglycinamidine cyclo-ligase of Ralstonia nicotianae (strain ATCC BAA-1114 / GMI1000) (Ralstonia solanacearum).